A 194-amino-acid polypeptide reads, in one-letter code: Holliday junction branch migration complex subunit RuvA (194 aa).

The interval 1–64 (MISRLTGKLV…EDAHLLFGFA (64 aa)) is domain I. The segment at 65–143 (TAEERKTFRQ…AHTVTDGLFA (79 aa)) is domain II. Positions 144-147 (AAPA) are flexible linker. The tract at residues 147–194 (AADETEDIVSTLLALGYSEREAKAAVKGVPEGTDVGEGVRLALKNLLK) is domain III.

This sequence belongs to the RuvA family. Homotetramer. Forms an RuvA(8)-RuvB(12)-Holliday junction (HJ) complex. HJ DNA is sandwiched between 2 RuvA tetramers; dsDNA enters through RuvA and exits via RuvB. An RuvB hexamer assembles on each DNA strand where it exits the tetramer. Each RuvB hexamer is contacted by two RuvA subunits (via domain III) on 2 adjacent RuvB subunits; this complex drives branch migration. In the full resolvosome a probable DNA-RuvA(4)-RuvB(12)-RuvC(2) complex forms which resolves the HJ.

It localises to the cytoplasm. Its function is as follows. The RuvA-RuvB-RuvC complex processes Holliday junction (HJ) DNA during genetic recombination and DNA repair, while the RuvA-RuvB complex plays an important role in the rescue of blocked DNA replication forks via replication fork reversal (RFR). RuvA specifically binds to HJ cruciform DNA, conferring on it an open structure. The RuvB hexamer acts as an ATP-dependent pump, pulling dsDNA into and through the RuvAB complex. HJ branch migration allows RuvC to scan DNA until it finds its consensus sequence, where it cleaves and resolves the cruciform DNA. The sequence is that of Holliday junction branch migration complex subunit RuvA from Neisseria meningitidis serogroup C (strain 053442).